A 21-amino-acid chain; its full sequence is Endo-1,4-beta-xylanase A (21 aa).

Belongs to the glycosyl hydrolase 10 (cellulase F) family.

It carries out the reaction Endohydrolysis of (1-&gt;4)-beta-D-xylosidic linkages in xylans.. It functions in the pathway glycan degradation; xylan degradation. This chain is Endo-1,4-beta-xylanase A, found in Dictyoglomus sp. (strain B4A).